The following is a 255-amino-acid chain: 3-hydroxyacyl-CoA dehydrogenase type-2 (255 aa).

Positions 14, 16, 35, 58, 59, and 85 each coordinate NAD(+). Serine 149 lines the substrate pocket. Positions 162, 166, 195, and 197 each coordinate NAD(+). Catalysis depends on tyrosine 162, which acts as the Proton acceptor.

Belongs to the short-chain dehydrogenases/reductases (SDR) family. In terms of assembly, component of mitochondrial ribonuclease P, a complex composed of rswl/MRPP1, scu/MRPP2 and mldr/MRPP3. Found in many tissues including CNS, imaginal disks and salivary glands. Highest expression in both embryonic gonadal primordia and mature ovaries and testes.

The protein localises to the mitochondrion. The enzyme catalyses a (3S)-3-hydroxyacyl-CoA + NAD(+) = a 3-oxoacyl-CoA + NADH + H(+). It catalyses the reaction (3S)-3-hydroxybutanoyl-CoA + NAD(+) = acetoacetyl-CoA + NADH + H(+). It carries out the reaction testosterone + NAD(+) = androst-4-ene-3,17-dione + NADH + H(+). The catalysed reaction is 5alpha-androstane-3alpha,17beta-diol + NAD(+) = 17beta-hydroxy-5alpha-androstan-3-one + NADH + H(+). The enzyme catalyses 17beta-estradiol + NAD(+) = estrone + NADH + H(+). It catalyses the reaction ursodeoxycholate + NAD(+) = 7-oxolithocholate + NADH + H(+). It carries out the reaction 3beta,7beta-dihydroxy-5beta-cholan-24-oate + NAD(+) = 3beta-hydroxy-7-oxo-5beta-cholan-24-oate + NADH + H(+). The catalysed reaction is 11-dehydrocorticosterone + NAD(+) = pregn-4-ene-3,11,20,21-tetraone + NADH + H(+). The enzyme catalyses cortisone + NAD(+) = 17alpha-hydroxypregn-4-en-3,11,20-trione-21-al + NADH + H(+). It catalyses the reaction cortisol + NAD(+) = 11beta,17alpha-dihydroxypregn-4-ene-3,20,21-trione + NADH + H(+). It carries out the reaction 5alpha-pregnan-20beta-ol-3-one + NAD(+) = 5alpha-pregnane-3,20-dione + NADH + H(+). The catalysed reaction is 17beta-hydroxy-5alpha-androstan-3-one + NAD(+) = 5alpha-androstan-3,17-dione + NADH + H(+). In terms of biological role, mitochondrial dehydrogenase involved in pathways of fatty acid, and steroid metabolism. Versatile enzyme presenting two types of activity; L-3-hydroxyacyl-CoA dehydrogenase ((3S)-3-hydroxyacyl-CoA dehydrogenase) activity and hydroxysteroid dehydrogenase (HSD) activity with a wide substrate spectrum. As a (3S)-3-hydroxyacyl-CoA dehydrogenase, it functions in the third step of the fatty acid beta-oxidation pathway, a major metabolic process in which fatty acids are oxidized to provide a significant source of energy, while also generating acyl-CoA metabolites used by many metabolic routes. As a HSD, it functions in the degradation pathways of glucocorticoids and sex steroids and epimerization of bile acids; catalyzes the beta-oxidation at position 17 of androgens and estrogens, has 3-alpha-hydroxysteroid dehydrogenase activity with androsterone, and carries out oxidative conversions of 7-beta-hydroxylated bile acids like ursodeoxycholate or isoursodeoxycholate (also known as 3-beta,7-beta-dihydroxy-5-beta-cholan-24-oate or 7-beta-hydroxyisolithocholate, respectively). Also exhibits 20-beta-OH and 21-OH dehydrogenase activities with C21 steroids. Essential for structural and functional integrity of mitochondria. Required for cell survival during embryonic development. May play a role in germline formation. Functionally, in addition to mitochondrial dehydrogenase activity, moonlights as a component of mitochondrial ribonuclease P, a complex that cleaves tRNA molecules in their 5'-ends. Essential for the structural and functional integrity of mitochondria. Function is essential for pupal development. The sequence is that of 3-hydroxyacyl-CoA dehydrogenase type-2 from Drosophila melanogaster (Fruit fly).